A 300-amino-acid polypeptide reads, in one-letter code: 33 kDa chaperonin (300 aa).

Intrachain disulfides connect Cys235–Cys237 and Cys269–Cys272.

This sequence belongs to the HSP33 family. In terms of processing, under oxidizing conditions two disulfide bonds are formed involving the reactive cysteines. Under reducing conditions zinc is bound to the reactive cysteines and the protein is inactive.

Its subcellular location is the cytoplasm. Redox regulated molecular chaperone. Protects both thermally unfolding and oxidatively damaged proteins from irreversible aggregation. Plays an important role in the bacterial defense system toward oxidative stress. This Pseudomonas syringae pv. tomato (strain ATCC BAA-871 / DC3000) protein is 33 kDa chaperonin.